The chain runs to 352 residues: Histidinol-phosphate aminotransferase 1 (352 aa).

Lys-211 is modified (N6-(pyridoxal phosphate)lysine).

This sequence belongs to the class-II pyridoxal-phosphate-dependent aminotransferase family. Histidinol-phosphate aminotransferase subfamily. In terms of assembly, homodimer. Pyridoxal 5'-phosphate is required as a cofactor.

The enzyme catalyses L-histidinol phosphate + 2-oxoglutarate = 3-(imidazol-4-yl)-2-oxopropyl phosphate + L-glutamate. The protein operates within amino-acid biosynthesis; L-histidine biosynthesis; L-histidine from 5-phospho-alpha-D-ribose 1-diphosphate: step 7/9. This Haemophilus influenzae (strain 86-028NP) protein is Histidinol-phosphate aminotransferase 1.